We begin with the raw amino-acid sequence, 153 residues long: Nucleoside diphosphate kinase 3 (153 aa).

Residues lysine 11, phenylalanine 59, arginine 87, threonine 93, arginine 104, and asparagine 114 each contribute to the ATP site. Histidine 117 acts as the Pros-phosphohistidine intermediate in catalysis.

This sequence belongs to the NDK family. As to quaternary structure, homohexamer. It depends on Mg(2+) as a cofactor.

The protein resides in the plastid. Its subcellular location is the chloroplast thylakoid lumen. It carries out the reaction a 2'-deoxyribonucleoside 5'-diphosphate + ATP = a 2'-deoxyribonucleoside 5'-triphosphate + ADP. The catalysed reaction is a ribonucleoside 5'-diphosphate + ATP = a ribonucleoside 5'-triphosphate + ADP. In terms of biological role, major role in the synthesis of nucleoside triphosphates other than ATP. The ATP gamma phosphate is transferred to the NDP beta phosphate via a ping-pong mechanism, using a phosphorylated active-site intermediate. Shows the highest specificity towards GDP. The polypeptide is Nucleoside diphosphate kinase 3 (Spinacia oleracea (Spinach)).